Consider the following 187-residue polypeptide: Cytokinin riboside 5'-monophosphate phosphoribohydrolase (187 aa).

An Isoglutamyl lysine isopeptide (Lys-Gln) (interchain with Q-Cter in protein Pup) cross-link involves residue Lys-74. Substrate contacts are provided by residues Glu-80, 98–99, 115–121, and Thr-127; these read RK and GVGTLDE.

Belongs to the LOG family. Homodimer. Post-translationally, pupylated at Lys-74 by the prokaryotic ubiquitin-like protein Pup, which leads to its degradation by the proteasome. The proteasomal control of cytokinin synthesis is essential to protect M.tuberculosis against host-produced NO.

The catalysed reaction is N(6)-(dimethylallyl)adenosine 5'-phosphate + H2O = N(6)-dimethylallyladenine + D-ribose 5-phosphate. The enzyme catalyses 9-ribosyl-trans-zeatin 5'-phosphate + H2O = trans-zeatin + D-ribose 5-phosphate. Functionally, catalyzes the hydrolytic removal of ribose 5'-monophosphate from nitrogen N6-modified adenosines, the final step of bioactive cytokinin synthesis. Is involved in the synthesis of isopentenyladenine (iP) and 2-methylthio-iP (2MeS-iP), the most abundant cytokinins detected in M.tuberculosis lysates and supernatants. Is also able to convert trans-zeatin-riboside monophosphate (tZRMP) to trans-zeatin (tZ) in vitro; however, it may not be involved in the biosynthesis of this minor cytokinin in vivo. Accumulation of Rv1205 sensitizes M.tuberculosis to nitric oxide since cytokinin breakdown products synergize with NO to kill M.tuberculosis. Shows a slow AMP hydrolase activity, but is not able to hydrolyze ATP. Displays no lysine decarboxylase (LDC) activity (L-lysine conversion to cadaverine). This chain is Cytokinin riboside 5'-monophosphate phosphoribohydrolase, found in Mycobacterium tuberculosis (strain ATCC 25618 / H37Rv).